The sequence spans 766 residues: Signal transducer and activator of transcription 3.2 (766 aa).

Positions 150-162 match the Essential for nuclear import motif; that stretch reads DVRKKVQDLEQKM. Residues 580 to 670 enclose the SH2 domain; sequence WNEGYIIGFI…DATNILVSPL (91 aa). Position 725 is a phosphoserine; by NLK (serine 725).

Belongs to the transcription factor STAT family. As to quaternary structure, forms a homodimer or a heterodimer with a related family member. Interacts with nlk.2. Post-translationally, phosphorylation of both tyrosine and serine residues, together with dimerization, is required for mesoderm induction.

The protein localises to the cytoplasm. It is found in the nucleus. In terms of biological role, transcription factor that binds to target promoter sequences and activates transcription upon il6st/gp130 stimulation. Mediates ventralization of embryos, at least in part via inhibition of smad2 signaling. Required for hairy2 to induce dll1/delta1 and promote neural crest cell proliferation and differentiation. Involved in TGFbeta-mediated mesoderm induction in early embryos, acting downstream of map3k7/tak1 and nlk.2. The chain is Signal transducer and activator of transcription 3.2 (stat3.2) from Xenopus laevis (African clawed frog).